A 679-amino-acid polypeptide reads, in one-letter code: UvrABC system protein B (679 aa).

Residues 25–176 (KGVNTGKEFQ…NLRSYLRSLV (152 aa)) form the Helicase ATP-binding domain. ATP is bound at residue 38-45 (GATGTGKT). The short motif at 91–114 (YYDYYQPEAYVPVSDTYIAKTASI) is the Beta-hairpin element. The 155-residue stretch at 429–583 (QIEDLLSEIR…KKYNQVNGIT (155 aa)) folds into the Helicase C-terminal domain. The 36-residue stretch at 639–674 (PDLIEKLEIKMKDAAKELNFEEAANLRDRIKKLRQK) folds into the UVR domain.

It belongs to the UvrB family. As to quaternary structure, forms a heterotetramer with UvrA during the search for lesions. Interacts with UvrC in an incision complex.

Its subcellular location is the cytoplasm. The UvrABC repair system catalyzes the recognition and processing of DNA lesions. A damage recognition complex composed of 2 UvrA and 2 UvrB subunits scans DNA for abnormalities. Upon binding of the UvrA(2)B(2) complex to a putative damaged site, the DNA wraps around one UvrB monomer. DNA wrap is dependent on ATP binding by UvrB and probably causes local melting of the DNA helix, facilitating insertion of UvrB beta-hairpin between the DNA strands. Then UvrB probes one DNA strand for the presence of a lesion. If a lesion is found the UvrA subunits dissociate and the UvrB-DNA preincision complex is formed. This complex is subsequently bound by UvrC and the second UvrB is released. If no lesion is found, the DNA wraps around the other UvrB subunit that will check the other stand for damage. The chain is UvrABC system protein B from Prochlorococcus marinus (strain MIT 9301).